Here is a 400-residue protein sequence, read N- to C-terminus: Queuine tRNA-ribosyltransferase (400 aa).

The active-site Proton acceptor is Asp93. Substrate contacts are provided by residues 93 to 97 (DSGGF), Asp147, Gln190, and Gly217. Residues 248–254 (GVGSPED) form an RNA binding region. The active-site Nucleophile is Asp267. Positions 272–276 (TRIAR) are RNA binding; important for wobble base 34 recognition. Residues Cys305, Cys307, Cys310, and His336 each contribute to the Zn(2+) site. The disordered stretch occupies residues 375–400 (RRERARAAGGAGHAPGPAEPLLPENR). Residues 388–400 (APGPAEPLLPENR) are compositionally biased toward low complexity.

Belongs to the queuine tRNA-ribosyltransferase family. In terms of assembly, homodimer. Within each dimer, one monomer is responsible for RNA recognition and catalysis, while the other monomer binds to the replacement base PreQ1. It depends on Zn(2+) as a cofactor.

The enzyme catalyses 7-aminomethyl-7-carbaguanine + guanosine(34) in tRNA = 7-aminomethyl-7-carbaguanosine(34) in tRNA + guanine. It participates in tRNA modification; tRNA-queuosine biosynthesis. Its function is as follows. Catalyzes the base-exchange of a guanine (G) residue with the queuine precursor 7-aminomethyl-7-deazaguanine (PreQ1) at position 34 (anticodon wobble position) in tRNAs with GU(N) anticodons (tRNA-Asp, -Asn, -His and -Tyr). Catalysis occurs through a double-displacement mechanism. The nucleophile active site attacks the C1' of nucleotide 34 to detach the guanine base from the RNA, forming a covalent enzyme-RNA intermediate. The proton acceptor active site deprotonates the incoming PreQ1, allowing a nucleophilic attack on the C1' of the ribose to form the product. After dissociation, two additional enzymatic reactions on the tRNA convert PreQ1 to queuine (Q), resulting in the hypermodified nucleoside queuosine (7-(((4,5-cis-dihydroxy-2-cyclopenten-1-yl)amino)methyl)-7-deazaguanosine). The sequence is that of Queuine tRNA-ribosyltransferase from Symbiobacterium thermophilum (strain DSM 24528 / JCM 14929 / IAM 14863 / T).